The sequence spans 3284 residues: MKKSNFFVLLLLAISAIQIDGLHYQLLDGIATFRLDNDDTTIGGVPRNSQGVVKIKLSCGLNRLSVENKVTEVSSLELIHNCIQTETRLVGLFLNSTWITLNEVNDDDEISIAVEAKYEVCYDDGIDRCDGSLWWLQVGGNEMALLGYREKCESGEINEEYARRMCKRPYRSEKSTAISDSQGVYYDGQVLKGVRAKQFSMRTSGSPTLRRMKRDAGDNTCDYTIESTSTSTTTPTTTTVTSTVTSTTTVPTSTSTVTTAMSTSTSTPSTSTTIESTSTTFTSTASTSTSSTSTTQQSSSTITSSPSSTTLSTSIPTTTTPEITSTLSSLPDNAICSYLDETTTSTTFTTTMLTSTTTEEPSTSTTTTEVTSTSSTVTTTEPTTTLTTSTASTSTTEPSTSTVTTSPSTSPVTSTVTSSSSSSTTVTTPTSTESTSTSPSSTVTTSTTAPSTSTTGPSSSSSTPSSTASSSVSSTASSTQSSTSTQQSSTTTKSETTTSSDGTNPDFYFVEKATTTFYDSTSVNLTLNSGLGIIGYQTSIECTSPTSSNYVSTTKDGACFTKSVSMPRLGGTYPASTFVGPGNYTFRATMTTDDKKVYYTYANVYIQEYSSTTIESESSTSAVASSTSSTPSTPSSTLSTSTVTEPSSTRSSDSTTTSAGSTTTLQESTTTSEESTTDSSTTTISDTSTTSSSPSSTTADSTSTLSVDQFDFILDSGLSWNETRHNEDSINIVPLPTNAITPTERSQTFECRNVSTEPFLIIKESTCLNYSNTVLNATYSSNIPIQPIETFLVGIGTYEFRINMTDLTTMQVVSHIFTLNVVADSTSTSEVTSTTSTGSSSESSAISTTSGIESTSTLEASTTDASQDSSTSTSDSGTTSDSTTIDSSNSTPSTSDSSGLSQTPSDSSSASDSMRTTTVDPDASTETPYDFVLENLTWNETVYYSENPFYITPIPNKEPGALTTAMTCQCRNDSSQPFVLLKESNCLTEFGKNGAYSASVSFNPMTSFVPATGTYEFLINVTNRASGESASHIFTMNVVLPTTTTETPPTTVSSSDDAGGKTGGTGATGGTGGTGSGGSATTLSTGDAVRSTTSGSGSGQSSTGSGAGGSGTTASGSGSGGSSGTGSDGVNSGKTTALNGDGTGSGTATTPGSHLGDGGSTSGSGSDSNGSSGVSTKSSSGSDTSGSSDSSGANGAFSATAQPSTRTTKTRSSLATVSPISAAEQAIIDAQKADVMNQLAGIMDGSASNNSLNTSSSLLNQISSLPAADLVEVAQSLLSNTLKIPGVGNMSSVDVLKTLQDNIATTNSELADEMAKVITKLANVNMTSAQSLNSVLSSLDLALKGSTVYTLGVSSTKSKDGTYAVIFGYVIASGYTLVSPRCTLSIYGSTIYLTGDTRASYKQLDGDTVTADTMLAAAIGIQGMFATNGRTVQVEQDKIDDKRSLVSGNIMATMSGVGDVQSGEYSYNDMYVTAWNVTYDNSTVGSTSQKNTSFSFNIPVSEVQYILLIESGTMIKLHSTQNIVSRGLVVTASYGGVTYTITCTNGTGKFVEVDTDNAIFSYNADSFTVVASDGSSASTVKKLIQMPIVIENVNLALFNQTTSPLVFSNAGSYSMRMVLSPQDIGIPAVSALSQTVSISTLSPTASYTKDDLQSLIKEQTLVTVSGTLFFSKASSIDVSGYSFFVDSTALYLSNSVTTLVISSPTYNIVSLALGGYGIQITAGTYTSGSQTHTVTLMEFSDTQKMRIDGGLIIRNGTNGYVIQNGQVSTEGDVSGTKIDIVPQSLMNQESQQQIETILSNTQDFLTNNGMTMTDAEINDTSNSLLSIAGSLTSALKIALDNPLSSDLAANLKYATDNYDSLYNVLPSDPDNIVYVEEMTSEEWAAYVTKMFQKNIAKNLANQLASTLDTLENTLAARAIATGNLPYDYSNSVDGTGMVIVIDDASNIVGKTQNCEEWAFKLPSPASTLNTAEITDKTLIQVGLVCYATNPRTYVDNFDMLITSGALEAHIKDENQIIIPITGTTAPIYVNGRGSEDDAVLTLMQQGDFASYQILDLHAFRTTNWNNSLQVEIIASQDYEIPNNDDTYMFSSFQSLPGPLESNHEWIFDLNTLNKTSNYFVTAGNLINNTGLFFIGIGKRNSSTNTGNSSDIVNYGQYDSMQWSFARSVPMDYQVAAVSKGCYFYQKTSDVFNSEGMYPSDGQGMQFVNCSTDHLTMFSVGAFNPTIDADFSYNYNVNEIEKNVKVMIAAVFMLVVYGCLTINAIICQRKDASRGRLRFLKDNEPHDGYMYVIAVETGYRMFATTDSTICFNLSGNEGDQIFRSFRSEEDGNWEFPFSWGTTDRFVMTTAFPLGELEYMRLWLDDAGLDHRESWYCNRIIVKDLQTQDIYYFPFNNWLGTKNGDGETERLARVEYKRRFLDESMSMHMLAQTISWFAMFTGGGNRLRDRVSRQDYSVSIIFSLVVVSMISITILKSDNSIISDSKSVSEFTFTIKDIAFGVGFGVLITFLNSLHILLCTKCRSHSEHYYYKKRKREDPEFKDNSGSWPMFMAGMARTIIVFPVLMGLIYISGAGMSLMDDLANSFYIRFLISLILWAVVFEPIKGLIWAFLILKTRKSHKIINKLEEALLRAKPAETFLRNPYGKIEKGLGTEIADVTKLRDTENRKMRDEQLFITIRDMLCFFASLYIMVMLTYYCKDRHGYWYQLEMSTILNINQKNYGDNTFMSIQHADDFWDWARESLATALLASWYDGNPAYGMRAYMNDKVSRSMGIGTIRQVRTKKSAECTMFKQFQGYINDCGEELTSKNEEKTLYMQAGWTELESENGTDASDEYTYKTSEELSTETVSGLLYSYSGGGYTISMSGTQAEIITLFNKLDSERWIDDHTRAVIIEFSAYNAQINYFSVVQLLVEIPKSGIYLPNSWVESVRLIKSEGSDGTVVKYYEMLYIFFSVLIFVKEIVFYLYGRYKVITTMKPTRNPFKIVYQLALGNFSPWNFMDLIVGALAVASVLAYTIRQRTTNRAMEDFNANNGNSYINLTEQRNWEIVFSYCLAGAVFFTSCKMIRILRFNRRIGVLAATLDNALGAIVSFGIAFLFFSMTFNSVLYAVLGNKMGGYRSLMATFQTALAGMLGKLDVTSIQPISQFAFVVIMLYMIAGSKLVLQLYVTIIMFEFEEIRNDSEKQTNDYEIIDHIKYKTKRRLGLLEPKDFAPVSIADTQKDFRLFHSAVAKVNLLHHRATRMLQTQGQYQNQTVINYTLSYDPVSAIHETGPKRFQKWRLNDVEKD.

Residues 1 to 21 (MKKSNFFVLLLLAISAIQIDG) form the signal peptide. 5 disordered regions span residues 226 to 326 (ESTS…ITST), 350 to 505 (TTML…GTNP), 623 to 702 (VASS…ADST), 827 to 926 (STSE…ASTE), and 1043 to 1216 (TTTE…SLAT). Low complexity-rich tracts occupy residues 227 to 326 (STST…ITST) and 350 to 500 (TTML…TTSS). Residues 827 to 913 (STSEVTSTTS…PSDSSSASDS (87 aa)) are compositionally biased toward low complexity. A compositionally biased stretch (polar residues) spans 914-926 (MRTTTVDPDASTE). Positions 1043 to 1057 (TTTETPPTTVSSSDD) are enriched in low complexity. Residues 1060-1078 (GKTGGTGATGGTGGTGSGG) are compositionally biased toward gly residues. Over residues 1079-1104 (SATTLSTGDAVRSTTSGSGSGQSSTG) the composition is skewed to low complexity. Residues 1105-1127 (SGAGGSGTTASGSGSGGSSGTGS) show a composition bias toward gly residues. Residues 1128–1138 (DGVNSGKTTAL) are compositionally biased toward polar residues. Over residues 1163–1192 (GSGSDSNGSSGVSTKSSSGSDTSGSSDSSG) the composition is skewed to low complexity. Residues 1197 to 1216 (FSATAQPSTRTTKTRSSLAT) are compositionally biased toward polar residues. The GAIN-B domain occupies 2064–2227 (WNNSLQVEII…SVGAFNPTID (164 aa)). Cys2181 and Cys2209 form a disulfide bridge. Positions 2181-2227 (CYFYQKTSDVFNSEGMYPSDGQGMQFVNCSTDHLTMFSVGAFNPTID) are GPS. Residues 2245–2265 (VMIAAVFMLVVYGCLTINAII) traverse the membrane as a helical segment. Residues 2288-2411 (YMYVIAVETG…GDGETERLAR (124 aa)) form the PLAT domain. 10 helical membrane-spanning segments follow: residues 2453 to 2473 (DYSV…ITIL), 2496 to 2516 (IAFG…HILL), 2557 to 2577 (IIVF…MSLM), 2592 to 2612 (LILW…FLIL), 2672 to 2692 (LFIT…MVML), 2945 to 2965 (MLYI…YLYG), 2994 to 3014 (WNFM…AYTI), 3043 to 3063 (WEIV…CKMI), 3089 to 3109 (FGIA…AVLG), and 3144 to 3164 (FAFV…LQLY).

This sequence belongs to the polycystin family. In terms of assembly, interacts (via PLAT domain) with atp-2 (via N-terminus) and with kin-10 (via C-terminus). Interacts (via C-terminus) with isoform a of stam-1/pqn-19 (via C-terminus). Autoproteolytically processed at the GPS region of the GAIN-B domain; this cleavage modulates receptor activity. In terms of tissue distribution, exclusively expressed in a subset of three categories of adult male sensory neurons: ray neurons, hook neurons and head cephalic (CEM) neurons.

The protein localises to the membrane. It is found in the cell projection. Its subcellular location is the cilium. Its function is as follows. Required for two aspects of male mating behavior: response to hermaphrodite contact and vulva location. Acts in the same pathway as pkd-2 and atp-2 in response behavior. May be required for ciliary targeting of pkd-2. This Caenorhabditis elegans protein is Location of vulva defective 1 (lov-1).